Here is a 200-residue protein sequence, read N- to C-terminus: MASRRHNNLNAKLVLLGDMGAGKSSLVIRFVKGQFLEFQESTIGAAFFSSTVSVNNATVKFEIWDTAGQERYHSLAPMYYRGAAAAIIVYDITSTESLARAKKWVQELQKQGNPNMVMALAGNKADLEDKRKVTAEEARLYAEENGLFFMETSAKTATNVNDIFYEIAKRLPRAQPAQNPAGMVLEDKPAQGSQAASCCT.

GTP-binding positions include 17–25, 36–42, 65–69, 123–126, and 153–155; these read GDMGAGKSS, LEFQEST, DTAGQ, NKAD, and SAK. The Effector region signature appears at 39–47; sequence QESTIGAAF. Residues C198 and C199 are each lipidated (S-geranylgeranyl cysteine).

This sequence belongs to the small GTPase superfamily. Rab family. As to expression, virtually not expressed in leaves, higher in stems and roots, and highest in flowers.

It is found in the cell membrane. Its function is as follows. Protein transport. Probably involved in vesicular traffic. In Nicotiana tabacum (Common tobacco), this protein is Ras-related protein Rab5 (RAB5).